A 401-amino-acid polypeptide reads, in one-letter code: Argininosuccinate synthase (401 aa).

8 to 16 (AYSGGLDTS) provides a ligand contact to ATP. Residue Tyr-85 coordinates L-citrulline. Gly-115 contributes to the ATP binding site. L-aspartate is bound by residues Thr-117, Asn-121, and Asp-122. Asn-121 contacts L-citrulline. The L-citrulline site is built by Arg-125, Ser-173, Glu-258, and Tyr-270.

The protein belongs to the argininosuccinate synthase family. Type 1 subfamily. In terms of assembly, homotetramer.

The protein localises to the cytoplasm. It carries out the reaction L-citrulline + L-aspartate + ATP = 2-(N(omega)-L-arginino)succinate + AMP + diphosphate + H(+). Its pathway is amino-acid biosynthesis; L-arginine biosynthesis; L-arginine from L-ornithine and carbamoyl phosphate: step 2/3. The protein is Argininosuccinate synthase of Staphylococcus aureus (strain MSSA476).